The primary structure comprises 194 residues: Outer membrane protein A (194 aa).

The N-terminal stretch at 1–24 is a signal peptide; sequence MNKPSKFALALAFAAVTASGVASA. The chain crosses the membrane as a beta stranded span at residues 30–38; the sequence is WRNPYGNVW. The region spanning 77 to 193 is the OmpA-like domain; the sequence is MAAKVVFNAD…RVEIEIVGSR (117 aa).

Belongs to the outer membrane OOP (TC 1.B.6) superfamily.

It localises to the cell outer membrane. In terms of biological role, structural protein that may protect the integrity of the bacterium. The polypeptide is Outer membrane protein A (Bordetella avium).